The following is a 418-amino-acid chain: Actin-related protein 3 (418 aa).

This sequence belongs to the actin family. ARP3 subfamily. Component of the Arp2/3 complex composed of actr2/arp2, actr3/arp3, arpc1b, arpc2, arpc3, arpc4 and arpc5.

It is found in the cytoplasm. Its subcellular location is the cytoskeleton. It localises to the cell projection. The protein resides in the nucleus. ATP-binding component of the Arp2/3 complex, a multiprotein complex that mediates actin polymerization upon stimulation by nucleation-promoting factor (NPF). The Arp2/3 complex mediates the formation of branched actin networks in the cytoplasm, providing the force for cell motility. Seems to contact the pointed end of the daughter actin filament. In addition to its role in the cytoplasmic cytoskeleton, the Arp2/3 complex also promotes actin polymerization in the nucleus, thereby regulating gene transcription and repair of damaged DNA. The Arp2/3 complex promotes homologous recombination (HR) repair in response to DNA damage by promoting nuclear actin polymerization, leading to drive motility of double-strand breaks (DSBs). This Takifugu rubripes (Japanese pufferfish) protein is Actin-related protein 3 (actr3).